A 368-amino-acid chain; its full sequence is Phosphoribosylformylglycinamidine cyclo-ligase (368 aa).

Belongs to the AIR synthase family.

Its subcellular location is the cytoplasm. It carries out the reaction 2-formamido-N(1)-(5-O-phospho-beta-D-ribosyl)acetamidine + ATP = 5-amino-1-(5-phospho-beta-D-ribosyl)imidazole + ADP + phosphate + H(+). Its pathway is purine metabolism; IMP biosynthesis via de novo pathway; 5-amino-1-(5-phospho-D-ribosyl)imidazole from N(2)-formyl-N(1)-(5-phospho-D-ribosyl)glycinamide: step 2/2. The sequence is that of Phosphoribosylformylglycinamidine cyclo-ligase from Novosphingobium aromaticivorans (strain ATCC 700278 / DSM 12444 / CCUG 56034 / CIP 105152 / NBRC 16084 / F199).